Consider the following 538-residue polypeptide: Putative cysteine ligase BshC (538 aa).

A coiled-coil region spans residues 460–484; that stretch reads KINEQIELLERMLKRNVEKKHEVEL.

It belongs to the BshC family.

Involved in bacillithiol (BSH) biosynthesis. May catalyze the last step of the pathway, the addition of cysteine to glucosamine malate (GlcN-Mal) to generate BSH. In Bacillus cereus (strain ATCC 10987 / NRS 248), this protein is Putative cysteine ligase BshC.